We begin with the raw amino-acid sequence, 303 residues long: B1 kinase (303 aa).

This sequence belongs to the protein kinase superfamily. Ser/Thr protein kinase family. Poxviruses subfamily. Interacts with host JIP1; this interaction increases the amount of MAPK bound to JIP1 and subsequently increases the activity of transcription factors, such as JUN, that respond to these complexes. Interacts with protein OPG198; this interaction inhibits the repressive activity of OPG198 pseudokinase on viral replication factory formation. The cofactor is Mg(2+). Autophosphorylated.

It is found in the virion. The protein localises to the host cytoplasm. It catalyses the reaction L-seryl-[protein] + ATP = O-phospho-L-seryl-[protein] + ADP + H(+). It carries out the reaction L-threonyl-[protein] + ATP = O-phospho-L-threonyl-[protein] + ADP + H(+). Its function is as follows. Essential serine/threonine-protein kinase that plays different role in the viral life cycle. Phosphorylates the host small ribosomal protein RACK1 thereby customizing the ribosomes to a state optimal for viral mRNAs (which contain poly-A leaders) but not for host mRNAs. Facilitates viral DNA replication by inhibiting host BANF1, a cellular host defense responsive to foreign DNA. Phosphorylates host BANF1 on serine and threonine residues; this leads to BANF1 relocalization to the cytoplasm, loss of dimerization and impaired DNA binding activity. Indeed, BANF1 activity depends on its DNA-binding property which is blocked by VPK1-mediated phosphorylation. Required for viral intermediate genes expression, probably by inhibiting host BANF1. Modulates cellular responses via host JUN by two different mechanisms, either by direct phosphorylation or by modulation of upstream JIP1-MAPK complexes. Seems to participate in the accumulation/processing of late proteins and thus in virion maturation. In addition, inhibits B12 repressive activity on viral DNA replication via a phosphorylation-dependent mechanism. The protein is B1 kinase (OPG187) of Cynomys gunnisoni (Gunnison's prairie dog).